The primary structure comprises 858 residues: Elongation factor 2b (858 aa).

One can recognise a tr-type G domain in the interval 17–362 (SNIRNMSVIA…MITIHLPSPV (346 aa)). GTP-binding positions include 26-33 (AHVDHGKS), 158-161 (NKMD), and 216-218 (SGL). H715 carries the diphthamide modification.

This sequence belongs to the TRAFAC class translation factor GTPase superfamily. Classic translation factor GTPase family. EF-G/EF-2 subfamily. Binds to 80S ribosomes. Actively translating ribosomes show mutually exclusive binding of eIF5a (EIF5A or EIF5A2) and EEF2/eEF2. Interacts with serbp1; interaction sequesters eef2/eEF2 at the A-site of the ribosome, thereby blocking the interaction sites of the mRNA-tRNA complex, promoting ribosome stabilization and hibernation. Interacts with habp4; interaction takes place at the A-site of hibernating ribosomes and promotes ribosome stabilization.

The protein localises to the cytoplasm. The protein resides in the nucleus. The enzyme catalyses GTP + H2O = GDP + phosphate + H(+). Catalyzes the GTP-dependent ribosomal translocation step during translation elongation. During this step, the ribosome changes from the pre-translocational (PRE) to the post-translocational (POST) state as the newly formed A-site-bound peptidyl-tRNA and P-site-bound deacylated tRNA move to the P and E sites, respectively. Catalyzes the coordinated movement of the two tRNA molecules, the mRNA and conformational changes in the ribosome. The protein is Elongation factor 2b of Danio rerio (Zebrafish).